The chain runs to 605 residues: Tyrosyl-DNA phosphodiesterase 1 (605 aa).

The short motif at 81 to 86 (RKKVKP) is the Nuclear localization signal element. His-236 functions as the Nucleophile in the catalytic mechanism. Lys-238 is a substrate binding site. The interaction with DNA stretch occupies residues 379–382 (SLGS). Residue His-466 is the Proton donor/acceptor of the active site. Lys-468 serves as a coordination point for substrate.

The protein belongs to the tyrosyl-DNA phosphodiesterase family. Ubiquitous, with a low level in roots.

The protein localises to the nucleus. Its activity is regulated as follows. Inhibited by vanadate analogs. DNA repair enzyme that can remove a variety of covalent adducts from DNA through hydrolysis of a 3'-phosphodiester bond, giving rise to DNA with a free 3' phosphate. Catalyzes the hydrolysis of dead-end complexes between DNA and the topoisomerase I active site tyrosine residue. The chain is Tyrosyl-DNA phosphodiesterase 1 from Arabidopsis thaliana (Mouse-ear cress).